A 74-amino-acid chain; its full sequence is uncharacterized protein (74 aa).

A dksA C4-type zinc finger spans residues 35–59; that stretch reads CEECDAPIPAARRAAYPSATRCVSC.

This is an uncharacterized protein from Enterobacteriaceae (Bacteriophage P2).